Reading from the N-terminus, the 866-residue chain is DNA topoisomerase 3-beta (866 aa).

The 146-residue stretch at 4-149 (TVLMVAEKPS…RIFRAKFSSV (146 aa)) folds into the Toprim domain. Positions 10, 114, and 116 each coordinate Mg(2+). Positions 165–585 (SKDEALAVDA…HVLQQFMKKY (421 aa)) constitute a Topo IA-type catalytic domain. An interaction with DNA region spans residues 207 to 212 (SYGPCQ). Tyr329 (O-(5'-phospho-DNA)-tyrosine intermediate) is an active-site residue. Positions 830–853 (MRRGRGRGRGRGRGRGSSRGRRGS) are enriched in basic residues. The tract at residues 830 to 866 (MRRGRGRGRGRGRGRGSSRGRRGSSRHDDPKMSFRDF) is disordered. Positions 854 to 866 (SRHDDPKMSFRDF) are enriched in basic and acidic residues.

It belongs to the type IA topoisomerase family. Mg(2+) serves as cofactor.

It carries out the reaction ATP-independent breakage of single-stranded DNA, followed by passage and rejoining.. Releases the supercoiling and torsional tension of DNA introduced during the DNA replication and transcription by transiently cleaving and rejoining one strand of the DNA duplex. Introduces a single-strand break via transesterification at a target site in duplex DNA. The scissile phosphodiester is attacked by the catalytic tyrosine of the enzyme, resulting in the formation of a DNA-(5'-phosphotyrosyl)-enzyme intermediate and the expulsion of a 3'-OH DNA strand. The free DNA strand than undergoes passage around the unbroken strand thus removing DNA supercoils. Finally, in the religation step, the DNA 3'-OH attacks the covalent intermediate to expel the active-site tyrosine and restore the DNA phosphodiester backbone. This chain is DNA topoisomerase 3-beta (TOP3B), found in Oryza sativa subsp. japonica (Rice).